The following is a 556-amino-acid chain: Oxygen-dependent choline dehydrogenase (556 aa).

Position 4 to 33 (4 to 33 (DYIIIGAGSAGNVLATRLTEDPNTSVLLLE)) interacts with FAD. His473 (proton acceptor) is an active-site residue.

This sequence belongs to the GMC oxidoreductase family. FAD serves as cofactor.

It carries out the reaction choline + A = betaine aldehyde + AH2. The enzyme catalyses betaine aldehyde + NAD(+) + H2O = glycine betaine + NADH + 2 H(+). The protein operates within amine and polyamine biosynthesis; betaine biosynthesis via choline pathway; betaine aldehyde from choline (cytochrome c reductase route): step 1/1. Its function is as follows. Involved in the biosynthesis of the osmoprotectant glycine betaine. Catalyzes the oxidation of choline to betaine aldehyde and betaine aldehyde to glycine betaine at the same rate. This Escherichia coli (strain K12 / DH10B) protein is Oxygen-dependent choline dehydrogenase.